We begin with the raw amino-acid sequence, 200 residues long: Protein RISC-INTERACTING CLEARING 3'-5' EXORIBONUCLEASE 1 (200 aa).

Oligomerization stretches follow at residues 35–66 (SKIL…KSEW), 102–127 (KFVT…IVIR), and 166–173 (DSIQSKWD).

This sequence belongs to the RICE family. As to quaternary structure, homohexamer with DnaQ-like exonuclease fold in a ring-shaped structure with a central cavity. Component of AGO1 and AGO10-centered RNA-induced silencing complexes (RISC). Interacts with and acts as a cofactor of AGO1 and AGO10. As to expression, ubiquitously expressed throughout development in germinating seeds, cotyledons, leaves and roots of young seedlings and adult plants, stems and inflorescence.

Its subcellular location is the cytoplasm. It carries out the reaction Exonucleolytic cleavage in the 3'- to 5'-direction to yield nucleoside 5'-phosphates.. Functionally, 3'-to-5' exoribonuclease (RNase) specifically targeting single-stranded RNAs. Triggers miRNA accumulation in RNA-induced silencing complex (RISC), composed of miRNAs and AGO proteins, by degrading uridylated cleavage fragments. Required during plant growth and development. In Arabidopsis thaliana (Mouse-ear cress), this protein is Protein RISC-INTERACTING CLEARING 3'-5' EXORIBONUCLEASE 1.